Reading from the N-terminus, the 430-residue chain is Enolase (430 aa).

(2R)-2-phosphoglycerate is bound at residue Gln-163. Catalysis depends on Glu-205, which acts as the Proton donor. Mg(2+) is bound by residues Asp-242, Glu-286, and Asp-313. Lys-338, Arg-367, Ser-368, and Lys-389 together coordinate (2R)-2-phosphoglycerate. Catalysis depends on Lys-338, which acts as the Proton acceptor.

This sequence belongs to the enolase family. Requires Mg(2+) as cofactor.

The protein resides in the cytoplasm. The protein localises to the secreted. It is found in the cell surface. The enzyme catalyses (2R)-2-phosphoglycerate = phosphoenolpyruvate + H2O. The protein operates within carbohydrate degradation; glycolysis; pyruvate from D-glyceraldehyde 3-phosphate: step 4/5. In terms of biological role, catalyzes the reversible conversion of 2-phosphoglycerate (2-PG) into phosphoenolpyruvate (PEP). It is essential for the degradation of carbohydrates via glycolysis. The protein is Enolase of Geotalea daltonii (strain DSM 22248 / JCM 15807 / FRC-32) (Geobacter daltonii).